The sequence spans 124 residues: Ribonuclease pancreatic (124 aa).

Basic and acidic residues predominate over residues 1 to 13 (KESAAAKFERQHM). The interval 1–24 (KESAAAKFERQHMDPSTSSASSSN) is disordered. Residues Lys7 and Arg10 each coordinate substrate. His12 acts as the Proton acceptor in catalysis. 4 cysteine pairs are disulfide-bonded: Cys26/Cys84, Cys40/Cys95, Cys58/Cys110, and Cys65/Cys72. Residues 41–45 (KPVNT), Lys66, and Arg85 contribute to the substrate site. Catalysis depends on His119, which acts as the Proton donor.

The protein belongs to the pancreatic ribonuclease family. As to quaternary structure, monomer. Interacts with and forms tight 1:1 complexes with RNH1. Dimerization of two such complexes may occur. Interaction with RNH1 inhibits this protein. As to expression, pancreas.

The protein resides in the secreted. It catalyses the reaction an [RNA] containing cytidine + H2O = an [RNA]-3'-cytidine-3'-phosphate + a 5'-hydroxy-ribonucleotide-3'-[RNA].. The catalysed reaction is an [RNA] containing uridine + H2O = an [RNA]-3'-uridine-3'-phosphate + a 5'-hydroxy-ribonucleotide-3'-[RNA].. Endonuclease that catalyzes the cleavage of RNA on the 3' side of pyrimidine nucleotides. Acts on single-stranded and double-stranded RNA. This is Ribonuclease pancreatic (RNASE1) from Cervus elaphus (Red deer).